The chain runs to 192 residues: Cytidylate kinase (192 aa).

7 to 15 contacts ATP; it reads GPPGSGKST.

It belongs to the cytidylate kinase family. Type 2 subfamily.

It is found in the cytoplasm. It catalyses the reaction CMP + ATP = CDP + ADP. The enzyme catalyses dCMP + ATP = dCDP + ADP. The chain is Cytidylate kinase from Halorubrum lacusprofundi (strain ATCC 49239 / DSM 5036 / JCM 8891 / ACAM 34).